The chain runs to 825 residues: MASYPSGSGKPKAKYPFKKRASLQASTAAPEARGGLGAPPLQSARSLPGPAPCLKHFPLDLRTSMDGKCKEIAEELFTRSLAESELRSAPYEFPEESPIEQLEERRQRLERQISQDVKLEPDILLRAKQDFLKTDSDSDLQLYKEQGEGQGDRSLRERDVLEREFQRVTISGEEKCGVPFTDLLDAAKSVVRALFIREKYMALSLQSFCPTTRRYLQQLAEKPLETRTYEQGPDTPVSADAPVHPPALEQHPYEHCEPSTMPGDLGLGLRMVRGVVHVYTRREPDEHCSEVELPYPDLQEFVADVNVLMALIINGPIKSFCYRRLQYLSSKFQMHVLLNEMKELAAQKKVPHRDFYNIRKVDTHIHASSCMNQKHLLRFIKRAMKRHLEEIVHVEQGREQTLREVFESMNLTAYDLSVDTLDVHADRNTFHRFDKFNAKYNPIGESVLREIFIKTDNRVSGKYFAHIIKEVMSDLEESKYQNAELRLSIYGRSRDEWDKLARWAVMHRVHSPNVRWLVQVPRLFDVYRTKGQLANFQEMLENIFLPLFEATVHPASHPELHLFLEHVDGFDSVDDESKPENHVFNLESPLPEAWVEEDNPPYAYYLYYTFANMAMLNHLRRQRGFHTFVLRPHCGEAGPIHHLVSAFMLAENISHGLLLRKAPVLQYLYYLAQIGIAMSPLSNNSLFLSYHRNPLPEYLSRGLMVSLSTDDPLQFHFTKEPLMEEYSIATQVWKLSSCDMCELARNSVLMSGFSHKVKSHWLGPNYTKEGPEGNDIRRTNVPDIRVGYRYETLCQELALITQAVQSEMLETIPEEAGITMSPGPQ.

The segment at 1 to 49 (MASYPSGSGKPKAKYPFKKRASLQASTAAPEARGGLGAPPLQSARSLPG) is disordered. Residues 11–21 (PKAKYPFKKRA) are compositionally biased toward basic residues. Serine 22 is modified (phosphoserine). At arginine 45 the chain carries Omega-N-methylarginine. Phosphoserine is present on residues serine 46, serine 64, and serine 80. Tyrosine 91 is subject to Phosphotyrosine. Serine 97 and serine 114 each carry phosphoserine. Threonine 134 carries the post-translational modification Phosphothreonine. Serine 136 and serine 138 each carry phosphoserine. Zn(2+) contacts are provided by histidine 364 and histidine 366. Substrate contacts are provided by residues histidine 366 and 435–440 (KFNAKY). Zn(2+) is bound at residue histidine 633. Glutamate 636 contributes to the substrate binding site. The active-site Proton acceptor is histidine 655. Aspartate 710 contacts Zn(2+). Residue 711-714 (DPLQ) coordinates substrate.

This sequence belongs to the metallo-dependent hydrolases superfamily. Adenosine and AMP deaminases family. Homotetramer. Zn(2+) serves as cofactor. Highly expressed in cerebellum.

The enzyme catalyses AMP + H2O + H(+) = IMP + NH4(+). Its pathway is purine metabolism; IMP biosynthesis via salvage pathway; IMP from AMP: step 1/1. Its function is as follows. AMP deaminase plays a critical role in energy metabolism. Catalyzes the deamination of AMP to IMP and plays an important role in the purine nucleotide cycle. The sequence is that of AMP deaminase 2 from Homo sapiens (Human).